Reading from the N-terminus, the 358-residue chain is Acetylxylan esterase / glucomannan deacetylase (358 aa).

An N-terminal signal peptide occupies residues Met1–Ala18. Residue Cys19 is the site of N-palmitoyl cysteine attachment. A lipid anchor (S-diacylglycerol cysteine) is attached at Cys19. Ser160 acts as the Nucleophile in catalysis. Residues Asp333 and His335 each act as charge relay system in the active site.

Belongs to the carbohydrate esterase 2 (CE2) family.

It localises to the cell membrane. The catalysed reaction is Deacetylation of xylans and xylo-oligosaccharides.. It functions in the pathway glycan degradation; xylan degradation. Functionally, involved in the degradation of plant cell wall polysaccharides. Catalyzes the deacetylation of acetylated birchwood xylan and glucomannan, with equal efficiency, and of the synthetic substrate 4-nitrophenyl acetate (4-NPAc). Does not bind cellulose, cellohexaose and beta-glucan. The chain is Acetylxylan esterase / glucomannan deacetylase from Cellvibrio japonicus (strain Ueda107) (Pseudomonas fluorescens subsp. cellulosa).